A 259-amino-acid chain; its full sequence is Sugar fermentation stimulation protein homolog (259 aa).

It belongs to the SfsA family.

The protein is Sugar fermentation stimulation protein homolog of Chloroflexus aurantiacus (strain ATCC 29364 / DSM 637 / Y-400-fl).